The primary structure comprises 428 residues: Chaperone SurA (428 aa).

Residues 1 to 20 form the signal peptide; it reads MKNWKTLLLGIAMIANTSFA. PpiC domains lie at 171–272 and 282–382; these read STEL…KVND and VTEV…ELLD.

Its subcellular location is the periplasm. It catalyses the reaction [protein]-peptidylproline (omega=180) = [protein]-peptidylproline (omega=0). In terms of biological role, chaperone involved in the correct folding and assembly of outer membrane proteins. Recognizes specific patterns of aromatic residues and the orientation of their side chains, which are found more frequently in integral outer membrane proteins. May act in both early periplasmic and late outer membrane-associated steps of protein maturation. In Salmonella paratyphi A (strain ATCC 9150 / SARB42), this protein is Chaperone SurA.